The following is a 309-amino-acid chain: Transcription initiation factor IIB 1 (309 aa).

2 tandem repeats follow at residues 125–208 and 219–300.

This sequence belongs to the TFIIB family.

Its function is as follows. Stabilizes TBP binding to an archaeal box-A promoter. Also responsible for recruiting RNA polymerase II to the pre-initiation complex (DNA-TBP-TFIIB). The sequence is that of Transcription initiation factor IIB 1 from Saccharolobus solfataricus (strain ATCC 35092 / DSM 1617 / JCM 11322 / P2) (Sulfolobus solfataricus).